The sequence spans 760 residues: Protein HEADING DATE 3B (760 aa).

2 stretches are compositionally biased toward gly residues: residues 1–12 and 60–70; these read MATRGGGGGGGG and SGGGGGGGVGG. 4 disordered regions span residues 1 to 120, 144 to 169, 236 to 262, and 285 to 346; these read MATR…KINK, SRSTAEAPQRRAENTIKSSSGKRLAD, VKSRTPLKDKEMEAAQTSKNVEVEKSS, and TGII…IEET. Residues 71–87 are compositionally biased toward low complexity; it reads SPAHSTSAASQSQSQSQ. The span at 94 to 107 shows a compositional bias: polar residues; it reads SLFQPFNVPSNRPG. Positions 108 to 120 are enriched in basic and acidic residues; the sequence is HSTEKINSDKINK. Residues 236 to 248 are compositionally biased toward basic and acidic residues; sequence VKSRTPLKDKEME. Positions 349-355 match the Nuclear localization signal motif; it reads KRKRLLE. 2 disordered regions span residues 485-543 and 707-760; these read LQQP…GVQL and FPTV…QRDD. 3 stretches are compositionally biased toward polar residues: residues 511-522, 531-543, and 707-730; these read QRDQAATNGVSK, ASDNKQNNWGVQL, and FPTVSAQNNQPQPSYSSRDNQTNV.

In terms of tissue distribution, expressed in mesophyll cells of young leaves, anthers, stigmas and the top of lemmas.

It is found in the nucleus. Its function is as follows. Involved in the regulation of flowering time under short day (SD) and long day (LD) conditions. Functions as a floral promoter by negatively regulating GHD7, a repressor of the photoperiodic control of flowering. Acts as a floral activator in the LD photoperiodic pathway. Involved in blue light-induced activation of EHD1 expression to promote flowering under SD conditions. The sequence is that of Protein HEADING DATE 3B (HD3B) from Oryza sativa subsp. japonica (Rice).